The sequence spans 401 residues: Phosphoglycerate kinase (401 aa).

Substrate is bound by residues 24 to 26, Arg40, 63 to 66, Arg122, and Arg155; these read DFN and HFGR. Residues Lys206, Gly297, Glu328, and 357 to 360 each bind ATP; that span reads GGDS.

This sequence belongs to the phosphoglycerate kinase family. In terms of assembly, monomer.

The protein localises to the cytoplasm. The enzyme catalyses (2R)-3-phosphoglycerate + ATP = (2R)-3-phospho-glyceroyl phosphate + ADP. It participates in carbohydrate degradation; glycolysis; pyruvate from D-glyceraldehyde 3-phosphate: step 2/5. The protein is Phosphoglycerate kinase of Gloeothece citriformis (strain PCC 7424) (Cyanothece sp. (strain PCC 7424)).